The primary structure comprises 333 residues: UDP-3-O-acylglucosamine N-acyltransferase (333 aa).

H225 acts as the Proton acceptor in catalysis.

This sequence belongs to the transferase hexapeptide repeat family. LpxD subfamily. In terms of assembly, homotrimer.

It catalyses the reaction a UDP-3-O-[(3R)-3-hydroxyacyl]-alpha-D-glucosamine + a (3R)-hydroxyacyl-[ACP] = a UDP-2-N,3-O-bis[(3R)-3-hydroxyacyl]-alpha-D-glucosamine + holo-[ACP] + H(+). It functions in the pathway bacterial outer membrane biogenesis; LPS lipid A biosynthesis. Catalyzes the N-acylation of UDP-3-O-acylglucosamine using 3-hydroxyacyl-ACP as the acyl donor. Is involved in the biosynthesis of lipid A, a phosphorylated glycolipid that anchors the lipopolysaccharide to the outer membrane of the cell. The polypeptide is UDP-3-O-acylglucosamine N-acyltransferase (Paracidovorax citrulli (strain AAC00-1) (Acidovorax citrulli)).